Consider the following 366-residue polypeptide: tRNA/tmRNA (uracil-C(5))-methyltransferase (366 aa).

Positions 190, 218, 223, 239, and 299 each coordinate S-adenosyl-L-methionine. Residue Cys324 is the Nucleophile of the active site. The Proton acceptor role is filled by Glu358.

Belongs to the class I-like SAM-binding methyltransferase superfamily. RNA M5U methyltransferase family. TrmA subfamily.

It catalyses the reaction uridine(54) in tRNA + S-adenosyl-L-methionine = 5-methyluridine(54) in tRNA + S-adenosyl-L-homocysteine + H(+). The enzyme catalyses uridine(341) in tmRNA + S-adenosyl-L-methionine = 5-methyluridine(341) in tmRNA + S-adenosyl-L-homocysteine + H(+). Dual-specificity methyltransferase that catalyzes the formation of 5-methyluridine at position 54 (m5U54) in all tRNAs, and that of position 341 (m5U341) in tmRNA (transfer-mRNA). In Escherichia coli O127:H6 (strain E2348/69 / EPEC), this protein is tRNA/tmRNA (uracil-C(5))-methyltransferase.